A 630-amino-acid polypeptide reads, in one-letter code: 1,4-alpha-glucan branching enzyme GlgB (630 aa).

Catalysis depends on Asp-311, which acts as the Nucleophile. Glu-362 serves as the catalytic Proton donor.

The protein belongs to the glycosyl hydrolase 13 family. GlgB subfamily. In terms of assembly, monomer.

The catalysed reaction is Transfers a segment of a (1-&gt;4)-alpha-D-glucan chain to a primary hydroxy group in a similar glucan chain.. It participates in glycan biosynthesis; glycogen biosynthesis. In terms of biological role, catalyzes the formation of the alpha-1,6-glucosidic linkages in glycogen by scission of a 1,4-alpha-linked oligosaccharide from growing alpha-1,4-glucan chains and the subsequent attachment of the oligosaccharide to the alpha-1,6 position. In Aquifex aeolicus (strain VF5), this protein is 1,4-alpha-glucan branching enzyme GlgB.